A 277-amino-acid chain; its full sequence is MKIKNWLKYASLKLKKTSSSPNLDAEILLSYVLKKCRTWIISNDFIKLTYDNLIDLNVLLQRRMNSEPISYLIHVKEFWSLPFLVSNSTLIPRPDTEILVEKALIYLKNLSNAKVLDLGTGCGSIALALASERLDCKIIGIDCVKESISIASKNAKILKLKNVSFLHSIWFSKVDNMFDMIVSNPPYLSFSEMKNVDKEVLFEPFIALFSSENGLGAIRHIIKYSKKYLYSKAWLLVEHGWKQKDKVQSFFYKYSFININTYRDYCDSDRVTVGQKQ.

Residues 119–123 (GTGCG), Asp142, Trp170, and Asn184 contribute to the S-adenosyl-L-methionine site. 184 to 187 (NPPY) provides a ligand contact to substrate.

It belongs to the protein N5-glutamine methyltransferase family. PrmC subfamily.

It catalyses the reaction L-glutaminyl-[peptide chain release factor] + S-adenosyl-L-methionine = N(5)-methyl-L-glutaminyl-[peptide chain release factor] + S-adenosyl-L-homocysteine + H(+). Its function is as follows. Methylates the class 1 translation termination release factors RF1/PrfA and RF2/PrfB on the glutamine residue of the universally conserved GGQ motif. This Buchnera aphidicola subsp. Baizongia pistaciae (strain Bp) protein is Release factor glutamine methyltransferase.